The sequence spans 345 residues: MRRSKYERPAHLIGNAERPRLTTSAMIASIAGADQPTRPAPFGHALSALAEKDDRVVGLSADLAKYTDLHVFRAAHPDRFYQMGMAEQLLMMSAAGMAREGLQPWVTTYAVFASRRAYDFICLAIAEEMLDVKVVCALPGLTTGYGPSHQATEDIAMFRGMPNLTIIDPCDASEIEQAVPAIAAHEGPVYMRLLRGNVPLVLEEYGYRFELGKAKLLRDGRDTLIISSGLMTMRALEAAEELRKNGIDAGVLHVPTIKPLDEATILAECARQGRLVVVAENHTVIGGLGEAVAATLMRSAVRPAAFRQIGLPDAFLEAGALPTLHDMYGISTTKIVAQIKEWLDE.

This sequence belongs to the transketolase family. The cofactor is thiamine diphosphate.

This is an uncharacterized protein from Sinorhizobium fredii (strain NBRC 101917 / NGR234).